Here is a 652-residue protein sequence, read N- to C-terminus: Complement component C1q receptor (652 aa).

The N-terminal stretch at 1-21 (MATSMGLLLLLLLLLTQPGAG) is a signal peptide. Residues 24–580 (ADTEAVVCVG…QNNDGTDGQK (557 aa)) are Extracellular-facing. In terms of domain architecture, C-type lectin spans 32 to 174 (VGTACYTAHS…CGSPGSPGSN (143 aa)). 16 disulfides stabilise this stretch: Cys141-Cys165, Cys264-Cys275, Cys271-Cys285, Cys287-Cys300, Cys306-Cys317, Cys311-Cys328, Cys330-Cys343, Cys349-Cys358, Cys354-Cys367, Cys369-Cys383, Cys389-Cys400, Cys396-Cys409, Cys411-Cys425, Cys431-Cys443, Cys439-Cys452, and Cys454-Cys467. EGF-like domains are found at residues 260–301 (PKYG…VTCA) and 302–344 (SRNP…LDCV). An N-linked (GlcNAc...) asparagine glycan is attached at Asn325. The 40-residue stretch at 345 to 384 (DVDECQDSPCAQECVNTPGGFRCECWVGYEPGGPGEGACQ) folds into the EGF-like 3; calcium-binding domain. An EGF-like 4; calcium-binding domain is found at 385–426 (DVDECALGRSPCAQGCTNTDGSFHCSCEEGYVLAGEDGTQCQ). The region spanning 427–468 (DVDECVGPGGPLCDSLCFNTQGSFHCGCLPGWVLAPNGVSCT) is the EGF-like 5; calcium-binding domain. 2 disordered regions span residues 472 to 546 (VSLG…VWRE) and 553 to 572 (TAAS…ATQN). The span at 512-526 (ATPTTSRPSLSSDAP) shows a compositional bias: polar residues. Residues 581 to 601 (LLLFYILGTVVAILLLLALAL) traverse the membrane as a helical segment. The Cytoplasmic segment spans residues 602–652 (GLLVYRKRRAKREEKKEKKPQNAADSYSWVPERAESRAMENQYSPTPGTDC). Residues 611–652 (AKREEKKEKKPQNAADSYSWVPERAESRAMENQYSPTPGTDC) are disordered. The segment covering 612–621 (KREEKKEKKP) has biased composition (basic and acidic residues). Ser627 carries the phosphoserine modification. A phosphotyrosine mark is found at Tyr628 and Tyr644. The segment covering 640–652 (MENQYSPTPGTDC) has biased composition (polar residues).

In terms of assembly, homodimer. Interacts with C1QBP; the association may represent a cell surface C1q receptor. Interacts with surfactant protein A/SFTPA1. Interacts with multimerin-2/MMRN2. Interacts with DAG1; this interaction plays an important role in endothelial cell migration. Interacts with CBL. Interacts with IGFBP7. Interacts with VEGFR2. (Microbial infection) Interacts with hepatitis virus C/HCV core protein. In terms of processing, N- and O-glycosylated. Phosphorylated on Tyr-628 and Tyr-644 by SRC; these phosphorylations promote endothelial cell adhesion and migration. In terms of tissue distribution, highly expressed in endothelial cells, platelets, cells of myeloid origin, such as monocytes and neutrophils. Not expressed in cells of lymphoid origin.

Its subcellular location is the cell membrane. In terms of biological role, cell surface receptor that plays a role in various physiological processes including inflammation, phagocytosis, and cell adhesion. Plays a role in phagocytosis and enhances the uptake of apoptotic cells and immune complexes by acting as a receptor for defense collagens including surfactant protein A/SFTPA1, C1q, and mannose-binding lectin (MBL2). Plays a role in the regulation of endothelial cell function and adhesion by activating angiogenesis. Mechanistically, exerts its angiogenic function by associating with beta-dystroglycan, leading to SRC-dependent phosphorylation and subsequent recruitment of CBL. In turn, CBL provides a docking site for downstream signaling components, such as CRKL to enhance cell migration. Participates in angiogenesis also by acting as a receptor for the ECM pan-endothelial glycoprotein multimerin-2/MMRN2 and IGFBP7 ligands. Both ligands play a non-redundant role in CD93-mediated endothelial cell function. Acts as a key regulator of endothelial barrier function through modulating VEGFR2 function. This chain is Complement component C1q receptor (CD93), found in Homo sapiens (Human).